We begin with the raw amino-acid sequence, 177 residues long: Large ribosomal subunit protein uL6 (177 aa).

This sequence belongs to the universal ribosomal protein uL6 family. In terms of assembly, part of the 50S ribosomal subunit.

This protein binds to the 23S rRNA, and is important in its secondary structure. It is located near the subunit interface in the base of the L7/L12 stalk, and near the tRNA binding site of the peptidyltransferase center. The sequence is that of Large ribosomal subunit protein uL6 from Vibrio parahaemolyticus serotype O3:K6 (strain RIMD 2210633).